The chain runs to 434 residues: D-amino acid dehydrogenase (434 aa).

3-17 serves as a coordination point for FAD; the sequence is VLVLGSGVIGTTSAW.

The protein belongs to the DadA oxidoreductase family. Requires FAD as cofactor.

The catalysed reaction is a D-alpha-amino acid + A + H2O = a 2-oxocarboxylate + AH2 + NH4(+). It participates in amino-acid degradation; D-alanine degradation; NH(3) and pyruvate from D-alanine: step 1/1. In terms of biological role, oxidative deamination of D-amino acids. This Stenotrophomonas maltophilia (strain R551-3) protein is D-amino acid dehydrogenase.